The following is a 1193-amino-acid chain: Kinesin-related protein 3 (1193 aa).

A Kinesin motor domain is found at 3–329 (SIRVVCRFRP…LRFGSRAKNI (327 aa)). Residue 85 to 92 (GQTGSGKT) coordinates ATP. 7 disordered regions span residues 377-429 (KSSG…SSNV), 573-600 (SSIA…KHAD), 611-630 (LLQR…TATS), 638-665 (ISES…ATSS), 973-1016 (GGGG…SANL), 1032-1114 (KAEP…PVKI), and 1127-1193 (FKKK…QQKD). A compositionally biased stretch (low complexity) spans 405 to 429 (SSNLSNSVNSTSNLNTSSNTSSSNV). A coiled-coil region spans residues 450–962 (ELIKVLQEKC…SQVGVDAQNT (513 aa)). Polar residues-rich tracts occupy residues 573–585 (SSIA…TPKS) and 614–630 (RTPS…TATS). Composition is skewed to low complexity over residues 643–665 (NIGS…ATSS) and 985–1006 (HSSS…NNNH). The span at 1007-1016 (TTPTPLSANL) shows a compositional bias: polar residues. Low complexity-rich tracts occupy residues 1044–1078 (NTSI…IGNS), 1086–1109 (NNNS…LNGN), and 1132–1149 (PSST…QSPQ). Composition is skewed to polar residues over residues 1150–1165 (TPSH…ISPN) and 1174–1193 (FSYT…QQKD).

This sequence belongs to the TRAFAC class myosin-kinesin ATPase superfamily. Kinesin family. Kinesin subfamily. In terms of assembly, dimer.

It is found in the cytoplasm. The protein resides in the cytoskeleton. In terms of biological role, microtubule-associated force-producing protein that plays a role in organelle transport. Its motor activity is directed toward the microtubule's plus end. The maximal velocity in an inverted motility assay (moving microtubules on fixed motors) was 1.96 um/s. The chain is Kinesin-related protein 3 (kif3) from Dictyostelium discoideum (Social amoeba).